The primary structure comprises 156 residues: Small ribosomal subunit protein uS7 (156 aa).

This sequence belongs to the universal ribosomal protein uS7 family. In terms of assembly, part of the 30S ribosomal subunit. Contacts proteins S9 and S11.

Functionally, one of the primary rRNA binding proteins, it binds directly to 16S rRNA where it nucleates assembly of the head domain of the 30S subunit. Is located at the subunit interface close to the decoding center, probably blocks exit of the E-site tRNA. This Bacillus velezensis (strain DSM 23117 / BGSC 10A6 / LMG 26770 / FZB42) (Bacillus amyloliquefaciens subsp. plantarum) protein is Small ribosomal subunit protein uS7.